We begin with the raw amino-acid sequence, 498 residues long: ATP synthase subunit beta, chloroplastic (498 aa).

172 to 179 serves as a coordination point for ATP; sequence GGAGVGKT.

This sequence belongs to the ATPase alpha/beta chains family. F-type ATPases have 2 components, CF(1) - the catalytic core - and CF(0) - the membrane proton channel. CF(1) has five subunits: alpha(3), beta(3), gamma(1), delta(1), epsilon(1). CF(0) has four main subunits: a(1), b(1), b'(1) and c(9-12).

It is found in the plastid. Its subcellular location is the chloroplast thylakoid membrane. It carries out the reaction ATP + H2O + 4 H(+)(in) = ADP + phosphate + 5 H(+)(out). Produces ATP from ADP in the presence of a proton gradient across the membrane. The catalytic sites are hosted primarily by the beta subunits. This Nicotiana sp. (Tobacco) protein is ATP synthase subunit beta, chloroplastic.